The primary structure comprises 261 residues: Carnitinyl-CoA dehydratase (261 aa).

The active-site Nucleophile is the E111. The active-site Proton acceptor is E131.

It belongs to the enoyl-CoA hydratase/isomerase family.

It catalyses the reaction (R)-carnitinyl-CoA = crotonobetainyl-CoA + H2O. It functions in the pathway amine and polyamine metabolism; carnitine metabolism. Its function is as follows. Catalyzes the reversible dehydration of L-carnitinyl-CoA to crotonobetainyl-CoA. The sequence is that of Carnitinyl-CoA dehydratase from Salmonella typhi.